Reading from the N-terminus, the 361-residue chain is Mannonate dehydratase 1 (361 aa).

The protein belongs to the mannonate dehydratase family. It depends on Fe(2+) as a cofactor. Mn(2+) serves as cofactor.

The enzyme catalyses D-mannonate = 2-dehydro-3-deoxy-D-gluconate + H2O. The protein operates within carbohydrate metabolism; pentose and glucuronate interconversion. Functionally, catalyzes the dehydration of D-mannonate. This chain is Mannonate dehydratase 1 (uxuA1), found in Halalkalibacterium halodurans (strain ATCC BAA-125 / DSM 18197 / FERM 7344 / JCM 9153 / C-125) (Bacillus halodurans).